Reading from the N-terminus, the 351-residue chain is Anthranilate phosphoribosyltransferase (351 aa).

5-phospho-alpha-D-ribose 1-diphosphate contacts are provided by residues Gly-80, Gly-83–Asp-84, Thr-88, Asn-90–Thr-93, Lys-108–Ser-116, and Ser-120. Gly-80 lines the anthranilate pocket. Ser-92 is a Mg(2+) binding site. Position 111 (Asn-111) interacts with anthranilate. Arg-166 contributes to the anthranilate binding site. Residues Asp-229 and Glu-230 each coordinate Mg(2+).

Belongs to the anthranilate phosphoribosyltransferase family. Homodimer. It depends on Mg(2+) as a cofactor.

The catalysed reaction is N-(5-phospho-beta-D-ribosyl)anthranilate + diphosphate = 5-phospho-alpha-D-ribose 1-diphosphate + anthranilate. The protein operates within amino-acid biosynthesis; L-tryptophan biosynthesis; L-tryptophan from chorismate: step 2/5. Catalyzes the transfer of the phosphoribosyl group of 5-phosphorylribose-1-pyrophosphate (PRPP) to anthranilate to yield N-(5'-phosphoribosyl)-anthranilate (PRA). This Chlorobium phaeovibrioides (strain DSM 265 / 1930) (Prosthecochloris vibrioformis (strain DSM 265)) protein is Anthranilate phosphoribosyltransferase.